A 242-amino-acid chain; its full sequence is Probable septum site-determining protein MinC (242 aa).

The protein belongs to the MinC family. In terms of assembly, interacts with MinD and FtsZ.

Cell division inhibitor that blocks the formation of polar Z ring septums. Rapidly oscillates between the poles of the cell to destabilize FtsZ filaments that have formed before they mature into polar Z rings. Prevents FtsZ polymerization. This Thioalkalivibrio sulfidiphilus (strain HL-EbGR7) protein is Probable septum site-determining protein MinC.